We begin with the raw amino-acid sequence, 62 residues long: Overexpressed in colon carcinoma 1 protein homolog (62 aa).

Gly residues predominate over residues 1-16 (MGCGNSTAGGAGGRGA). A disordered region spans residues 1-62 (MGCGNSTAGG…SGQTKAAPKD (62 aa)).

It belongs to the OCC1 family.

The protein is Overexpressed in colon carcinoma 1 protein homolog of Gallus gallus (Chicken).